Here is a 666-residue protein sequence, read N- to C-terminus: Endogenous retrovirus group K member 9 Gag polyprotein (666 aa).

Gly-2 carries N-myristoyl glycine lipidation. The tract at residues Gly-165–Leu-264 is disordered. Positions Gly-232–Pro-247 are enriched in pro residues. 2 consecutive CCHC-type zinc fingers follow at residues Gly-544–Val-561 and Asp-580–Ser-597. The interval Lys-598 to Leu-641 is disordered. Residues Gln-604–Gly-622 show a composition bias toward polar residues. Residues Phe-624–Pro-640 are compositionally biased toward low complexity.

Belongs to the beta type-B retroviral Gag protein family. HERV class-II K(HML-2) gag subfamily. Myristoylation is essential for retroviral assembly. Alteration of the glycine residue leads to a block in the budding of particles and an accumulation of Gag inside the cell. In terms of processing, specific enzymatic cleavages may yield mature proteins.

The protein resides in the cell membrane. Functionally, the products of the Gag polyproteins of infectious retroviruses perform highly complex orchestrated tasks during the assembly, budding, maturation, and infection stages of the viral replication cycle. During viral assembly, the proteins form membrane associations and self-associations that ultimately result in budding of an immature virion from the infected cell. Gag precursors also function during viral assembly to selectively bind and package two plus strands of genomic RNA. Endogenous Gag proteins may have kept, lost or modified their original function during evolution. This chain is Endogenous retrovirus group K member 9 Gag polyprotein (ERVK-9), found in Homo sapiens (Human).